A 71-amino-acid chain; its full sequence is Ceratotoxin-A (71 aa).

The N-terminal stretch at 1–23 is a signal peptide; the sequence is MANLKAVFLICIVAFIAFQCVVA. 2 propeptides span residues 24 to 35 and 65 to 71; these read EPAAEDSIVVKR and VAAGLVG.

Homomer of four to six subunits.

It is found in the secreted. Its function is as follows. Female-specific peptides with potent activity against Gram-positive and Gram-negative bacteria. They have as well hemolytic activity. The sequence is that of Ceratotoxin-A (CTXA2) from Ceratitis capitata (Mediterranean fruit fly).